The sequence spans 559 residues: NXPE family member 3 (559 aa).

Residues 1-30 form the signal peptide; the sequence is MWTNFFKLRLFCCLLAVLMVVVLVVNVTQV. Asn26, Asn237, and Asn346 each carry an N-linked (GlcNAc...) asparagine glycan.

This sequence belongs to the NXPE family.

The protein resides in the secreted. This chain is NXPE family member 3 (NXPE3), found in Pongo abelii (Sumatran orangutan).